Reading from the N-terminus, the 286-residue chain is MASLRDIKAKINSTKKTSQITKAMEMVSASKLNRAEQNAKSFVPYMEKIQEVVASIAQGSKGINHPMLNARPVKRTGYIVITSDRGLAGGYNSNVLRTVSNVIRERHNMDSNQYSIIVLGRLGRDYLKRRGFNIIDEVVGLSDHPSFTDIKDLASRAIAMFADGAYDELYIYYNHYVSKISQEVTENKILPLTDVASDKPTTAYEFEPSEEEILKVLLPQYAESLVYGALLDGKASEHAARMTAMKSATDNAMEVIDSLTLSFNRARQAAITQEITEIVGGAAALE.

The protein belongs to the ATPase gamma chain family. In terms of assembly, F-type ATPases have 2 components, CF(1) - the catalytic core - and CF(0) - the membrane proton channel. CF(1) has five subunits: alpha(3), beta(3), gamma(1), delta(1), epsilon(1). CF(0) has three main subunits: a, b and c.

It localises to the cell membrane. Functionally, produces ATP from ADP in the presence of a proton gradient across the membrane. The gamma chain is believed to be important in regulating ATPase activity and the flow of protons through the CF(0) complex. This Bacillus anthracis (strain A0248) protein is ATP synthase gamma chain.